A 510-amino-acid chain; its full sequence is Maturase K (510 aa).

The protein belongs to the intron maturase 2 family. MatK subfamily.

It is found in the plastid. It localises to the chloroplast. Functionally, usually encoded in the trnK tRNA gene intron. Probably assists in splicing its own and other chloroplast group II introns. The protein is Maturase K of Populus alba (White poplar).